A 60-amino-acid polypeptide reads, in one-letter code: Ribosome modulation factor (60 aa).

The protein belongs to the ribosome modulation factor family.

It localises to the cytoplasm. During stationary phase, converts 70S ribosomes to an inactive dimeric form (100S ribosomes). The protein is Ribosome modulation factor of Kangiella koreensis (strain DSM 16069 / JCM 12317 / KCTC 12182 / SW-125).